Consider the following 126-residue polypeptide: Methylglyoxal synthase (126 aa).

In terms of domain architecture, MGS-like spans Met1 to Thr126. Residues His10, Lys14, Thr36–Thr39, and Ser56–Gly57 each bind substrate. Asp62 serves as the catalytic Proton donor/acceptor. His89 lines the substrate pocket.

Belongs to the methylglyoxal synthase family.

The enzyme catalyses dihydroxyacetone phosphate = methylglyoxal + phosphate. Catalyzes the formation of methylglyoxal from dihydroxyacetone phosphate. The sequence is that of Methylglyoxal synthase from Borrelia garinii subsp. bavariensis (strain ATCC BAA-2496 / DSM 23469 / PBi) (Borreliella bavariensis).